The following is a 525-amino-acid chain: Rho guanine nucleotide exchange factor gef3 (525 aa).

The 197-residue stretch at 72–268 folds into the DH domain; the sequence is AIISVLEEFR…EIASQRMNEL (197 aa).

The protein localises to the cytoplasm. In terms of biological role, has a role in the control of cell polarity and cytokinesis. Involved in bipolar growth and septum formation. In Schizosaccharomyces pombe (strain 972 / ATCC 24843) (Fission yeast), this protein is Rho guanine nucleotide exchange factor gef3 (gef3).